Consider the following 474-residue polypeptide: 3-isopropylmalate dehydratase large subunit (474 aa).

The interval 293–313 (GTTPGQGIGITEEIPAPEDLP) is disordered. 3 residues coordinate [4Fe-4S] cluster: cysteine 348, cysteine 408, and cysteine 411.

This sequence belongs to the aconitase/IPM isomerase family. LeuC type 1 subfamily. As to quaternary structure, heterodimer of LeuC and LeuD. Requires [4Fe-4S] cluster as cofactor.

It carries out the reaction (2R,3S)-3-isopropylmalate = (2S)-2-isopropylmalate. It functions in the pathway amino-acid biosynthesis; L-leucine biosynthesis; L-leucine from 3-methyl-2-oxobutanoate: step 2/4. Catalyzes the isomerization between 2-isopropylmalate and 3-isopropylmalate, via the formation of 2-isopropylmaleate. This chain is 3-isopropylmalate dehydratase large subunit, found in Natronomonas pharaonis (strain ATCC 35678 / DSM 2160 / CIP 103997 / JCM 8858 / NBRC 14720 / NCIMB 2260 / Gabara) (Halobacterium pharaonis).